The sequence spans 233 residues: Pyridoxine 5'-phosphate synthase (233 aa).

N6 lines the 3-amino-2-oxopropyl phosphate pocket. 1-deoxy-D-xylulose 5-phosphate is bound at residue 8-9 (DH). Position 17 (R17) interacts with 3-amino-2-oxopropyl phosphate. H42 functions as the Proton acceptor in the catalytic mechanism. 2 residues coordinate 1-deoxy-D-xylulose 5-phosphate: R44 and H49. Residue E69 is the Proton acceptor of the active site. A 1-deoxy-D-xylulose 5-phosphate-binding site is contributed by T99. The active-site Proton donor is the H186. Residues G187 and 208–209 (GH) each bind 3-amino-2-oxopropyl phosphate.

This sequence belongs to the PNP synthase family. As to quaternary structure, homooctamer; tetramer of dimers.

The protein localises to the cytoplasm. The enzyme catalyses 3-amino-2-oxopropyl phosphate + 1-deoxy-D-xylulose 5-phosphate = pyridoxine 5'-phosphate + phosphate + 2 H2O + H(+). It participates in cofactor biosynthesis; pyridoxine 5'-phosphate biosynthesis; pyridoxine 5'-phosphate from D-erythrose 4-phosphate: step 5/5. In terms of biological role, catalyzes the complicated ring closure reaction between the two acyclic compounds 1-deoxy-D-xylulose-5-phosphate (DXP) and 3-amino-2-oxopropyl phosphate (1-amino-acetone-3-phosphate or AAP) to form pyridoxine 5'-phosphate (PNP) and inorganic phosphate. The chain is Pyridoxine 5'-phosphate synthase from Anaplasma phagocytophilum (strain HZ).